The primary structure comprises 212 residues: Ribonuclease HII (212 aa).

An RNase H type-2 domain is found at S28–V212. Positions 34, 35, and 127 each coordinate a divalent metal cation.

This sequence belongs to the RNase HII family. The cofactor is Mn(2+). Requires Mg(2+) as cofactor.

The protein resides in the cytoplasm. It carries out the reaction Endonucleolytic cleavage to 5'-phosphomonoester.. Its function is as follows. Endonuclease that specifically degrades the RNA of RNA-DNA hybrids. This chain is Ribonuclease HII, found in Chlamydia caviae (strain ATCC VR-813 / DSM 19441 / 03DC25 / GPIC) (Chlamydophila caviae).